The chain runs to 141 residues: D-aminoacyl-tRNA deacylase (141 aa).

The Gly-cisPro motif, important for rejection of L-amino acids motif lies at Gly-133 to Pro-134.

This sequence belongs to the DTD family. Homodimer.

It localises to the cytoplasm. It carries out the reaction glycyl-tRNA(Ala) + H2O = tRNA(Ala) + glycine + H(+). It catalyses the reaction a D-aminoacyl-tRNA + H2O = a tRNA + a D-alpha-amino acid + H(+). Its function is as follows. An aminoacyl-tRNA editing enzyme that deacylates mischarged D-aminoacyl-tRNAs. Also deacylates mischarged glycyl-tRNA(Ala), protecting cells against glycine mischarging by AlaRS. Acts via tRNA-based rather than protein-based catalysis; rejects L-amino acids rather than detecting D-amino acids in the active site. By recycling D-aminoacyl-tRNA to D-amino acids and free tRNA molecules, this enzyme counteracts the toxicity associated with the formation of D-aminoacyl-tRNA entities in vivo and helps enforce protein L-homochirality. The chain is D-aminoacyl-tRNA deacylase from Thermobifida fusca (strain YX).